The chain runs to 168 residues: Peptide deformylase 1 (168 aa).

Fe cation is bound by residues Cys92 and His134. Residue Glu135 is part of the active site. Residue His138 participates in Fe cation binding.

The protein belongs to the polypeptide deformylase family. The cofactor is Fe(2+).

The catalysed reaction is N-terminal N-formyl-L-methionyl-[peptide] + H2O = N-terminal L-methionyl-[peptide] + formate. Its function is as follows. Removes the formyl group from the N-terminal Met of newly synthesized proteins. Requires at least a dipeptide for an efficient rate of reaction. N-terminal L-methionine is a prerequisite for activity but the enzyme has broad specificity at other positions. This chain is Peptide deformylase 1, found in Pseudomonas syringae pv. tomato (strain ATCC BAA-871 / DC3000).